The sequence spans 599 residues: Elongation factor 4 (599 aa).

The tr-type G domain maps to 5–187 (NRIRNFSIVA…AIVTRLPAPK (183 aa)). GTP contacts are provided by residues 17–22 (DHGKST) and 134–137 (NKVD).

It belongs to the TRAFAC class translation factor GTPase superfamily. Classic translation factor GTPase family. LepA subfamily.

It is found in the cell inner membrane. The enzyme catalyses GTP + H2O = GDP + phosphate + H(+). Its function is as follows. Required for accurate and efficient protein synthesis under certain stress conditions. May act as a fidelity factor of the translation reaction, by catalyzing a one-codon backward translocation of tRNAs on improperly translocated ribosomes. Back-translocation proceeds from a post-translocation (POST) complex to a pre-translocation (PRE) complex, thus giving elongation factor G a second chance to translocate the tRNAs correctly. Binds to ribosomes in a GTP-dependent manner. The polypeptide is Elongation factor 4 (Jannaschia sp. (strain CCS1)).